A 541-amino-acid polypeptide reads, in one-letter code: Pheromone B beta 1 receptor (541 aa).

Residues 1–3 (MHP) are Extracellular-facing. A helical membrane pass occupies residues 4–24 (EFAPVAFLSAASLALPLPWHW). At 25 to 33 (RAGNVATLS) the chain is on the cytoplasmic side. A helical transmembrane segment spans residues 34-54 (IIAWLFIMNMIYGINAVIWAG). The Extracellular portion of the chain corresponds to 55–69 (SARITAVVYCDITTK). Residues 70 to 90 (LTIGGNFALPAACLCLCIHLE) form a helical membrane-spanning segment. The Cytoplasmic portion of the chain corresponds to 91–109 (RVASVRAAQTTAADKRRRT). Residues 110–130 (IFELAMCWLLPIIFMALHYVV) traverse the membrane as a helical segment. Over 131-150 (QGHRFDIVEDFGCRPATYYS) the chain is Extracellular. Residues 151-171 (IPAIFIVWVPPLTMAAASLVY) traverse the membrane as a helical segment. Topologically, residues 172–205 (ASLAIRHFMHRRLSFAMHLQARSSALTTSRYLRL) are cytoplasmic. A helical membrane pass occupies residues 206 to 226 (ILMAIVQLVWLVVTTAYTLWF). At 227–264 (SSMTLNLRPWTTWADVHSNFGRIQTWPAIITPAVILRG) the chain is on the extracellular side. The helical transmembrane segment at 265–285 (ACTLWWMVPASTWIFVAFFAF) threads the bilayer. Residues 286–541 (GNDAVEEYKR…IASVFPGGRR (256 aa)) lie on the Cytoplasmic side of the membrane. 2 disordered regions span residues 364-393 (TTSTVVSSMPPPYSLPPPPPPQKYTSPLDS) and 414-541 (YTIE…GGRR). The segment covering 372 to 385 (MPPPYSLPPPPPPQ) has biased composition (pro residues). A compositionally biased stretch (low complexity) spans 420–429 (PETPSTSSST). Pro residues-rich tracts occupy residues 467 to 478 (IPAPPSLPPPTH) and 493 to 502 (SRPPAFPPYP).

Belongs to the G-protein coupled receptor 4 family.

It is found in the membrane. Receptor for the BBP1 pheromone, a prenylated mating factor. This is Pheromone B beta 1 receptor (BBR1) from Schizophyllum commune (Split gill fungus).